The sequence spans 269 residues: Energy-coupling factor transporter ATP-binding protein EcfA1 (269 aa).

An ABC transporter domain is found at I8–D242. G42–S49 contributes to the ATP binding site.

The protein belongs to the ABC transporter superfamily. Energy-coupling factor EcfA family. Forms a stable energy-coupling factor (ECF) transporter complex composed of 2 membrane-embedded substrate-binding proteins (S component), 2 ATP-binding proteins (A component) and 2 transmembrane proteins (T component).

Its subcellular location is the cell membrane. In terms of biological role, ATP-binding (A) component of a common energy-coupling factor (ECF) ABC-transporter complex. Unlike classic ABC transporters this ECF transporter provides the energy necessary to transport a number of different substrates. In Staphylococcus saprophyticus subsp. saprophyticus (strain ATCC 15305 / DSM 20229 / NCIMB 8711 / NCTC 7292 / S-41), this protein is Energy-coupling factor transporter ATP-binding protein EcfA1.